The sequence spans 426 residues: Glutamate-1-semialdehyde 2,1-aminomutase (426 aa).

Lys-265 carries the post-translational modification N6-(pyridoxal phosphate)lysine.

It belongs to the class-III pyridoxal-phosphate-dependent aminotransferase family. HemL subfamily. As to quaternary structure, homodimer. Pyridoxal 5'-phosphate is required as a cofactor.

The protein resides in the cytoplasm. It catalyses the reaction (S)-4-amino-5-oxopentanoate = 5-aminolevulinate. The protein operates within porphyrin-containing compound metabolism; protoporphyrin-IX biosynthesis; 5-aminolevulinate from L-glutamyl-tRNA(Glu): step 2/2. This chain is Glutamate-1-semialdehyde 2,1-aminomutase, found in Neisseria gonorrhoeae (strain NCCP11945).